Here is a 269-residue protein sequence, read N- to C-terminus: 1,6-dihydroxycyclohexa-2,4-diene-1-carboxylate dehydrogenase (269 aa).

Position 11–35 (11–35 (VITGAAQGIGRRVAERMAAEGGRLL)) interacts with NAD(+). Serine 142 serves as a coordination point for substrate. Tyrosine 153 serves as the catalytic Proton acceptor.

This sequence belongs to the short-chain dehydrogenases/reductases (SDR) family. As to quaternary structure, homodimer.

It carries out the reaction (1R,6S)-1,6-dihydroxycyclohexa-2,4-diene-1-carboxylate + NAD(+) = catechol + CO2 + NADH. Its pathway is aromatic compound metabolism; benzoate degradation via hydroxylation; catechol from benzoate: step 2/2. Degradation of 2-hydro-1,2-dihydroxy benzoate (DHB) to catechol. The protein is 1,6-dihydroxycyclohexa-2,4-diene-1-carboxylate dehydrogenase (xylL) of Pseudomonas putida (Arthrobacter siderocapsulatus).